Here is a 450-residue protein sequence, read N- to C-terminus: Probable glycine dehydrogenase (decarboxylating) subunit 1 (450 aa).

Belongs to the GcvP family. N-terminal subunit subfamily. The glycine cleavage system is composed of four proteins: P, T, L and H. In this organism, the P 'protein' is a heterodimer of two subunits.

It carries out the reaction N(6)-[(R)-lipoyl]-L-lysyl-[glycine-cleavage complex H protein] + glycine + H(+) = N(6)-[(R)-S(8)-aminomethyldihydrolipoyl]-L-lysyl-[glycine-cleavage complex H protein] + CO2. Its function is as follows. The glycine cleavage system catalyzes the degradation of glycine. The P protein binds the alpha-amino group of glycine through its pyridoxal phosphate cofactor; CO(2) is released and the remaining methylamine moiety is then transferred to the lipoamide cofactor of the H protein. This Desulfotalea psychrophila (strain LSv54 / DSM 12343) protein is Probable glycine dehydrogenase (decarboxylating) subunit 1.